The chain runs to 138 residues: Large ribosomal subunit protein uL16c (138 aa).

This sequence belongs to the universal ribosomal protein uL16 family. As to quaternary structure, part of the 50S ribosomal subunit.

Its subcellular location is the plastid. The protein resides in the chloroplast. This chain is Large ribosomal subunit protein uL16c, found in Tetradesmus obliquus (Green alga).